A 101-amino-acid chain; its full sequence is NAD(P)H-quinone oxidoreductase subunit 4L, chloroplastic (101 aa).

Transmembrane regions (helical) follow at residues 2-22, 32-52, and 61-81; these read YIEN…YGLL, MCLE…SNFI, and VIAI…LALV.

It belongs to the complex I subunit 4L family. In terms of assembly, NDH is composed of at least 16 different subunits, 5 of which are encoded in the nucleus.

The protein resides in the plastid. It localises to the chloroplast thylakoid membrane. The enzyme catalyses a plastoquinone + NADH + (n+1) H(+)(in) = a plastoquinol + NAD(+) + n H(+)(out). The catalysed reaction is a plastoquinone + NADPH + (n+1) H(+)(in) = a plastoquinol + NADP(+) + n H(+)(out). NDH shuttles electrons from NAD(P)H:plastoquinone, via FMN and iron-sulfur (Fe-S) centers, to quinones in the photosynthetic chain and possibly in a chloroplast respiratory chain. The immediate electron acceptor for the enzyme in this species is believed to be plastoquinone. Couples the redox reaction to proton translocation, and thus conserves the redox energy in a proton gradient. The chain is NAD(P)H-quinone oxidoreductase subunit 4L, chloroplastic from Mesostigma viride (Green alga).